Here is a 393-residue protein sequence, read N- to C-terminus: Isocitrate dehydrogenase [NADP] (393 aa).

D-threo-isocitrate-binding residues include Ser-102, Asn-104, Arg-108, Arg-118, and Arg-142. Asp-283 contacts Mg(2+).

Belongs to the isocitrate and isopropylmalate dehydrogenases family. As to quaternary structure, homodimer. Mg(2+) is required as a cofactor. It depends on Mn(2+) as a cofactor.

The catalysed reaction is D-threo-isocitrate + NADP(+) = 2-oxoglutarate + CO2 + NADPH. Functionally, catalyzes the oxidative decarboxylation of isocitrate to 2-oxoglutarate and carbon dioxide with the concomitant reduction of NADP(+). This Streptococcus mutans serotype c (strain ATCC 700610 / UA159) protein is Isocitrate dehydrogenase [NADP] (icd).